The sequence spans 109 residues: Staphostatin B (109 aa).

The binds to staphopain B stretch occupies residues 97-101 (IGTSR).

This sequence belongs to the protease inhibitor I57 (SspC) family. Forms a stable non-covalent complex with prematurely activated/folded SspB.

It localises to the cytoplasm. Specifically inhibits the cysteine protease staphopain B (SspB) by blocking the active site of the enzyme. Probably required to protect cytoplasmic proteins from being degraded by prematurely activated/folded prostaphopain B. Also involved in growth capacity, viability and bacterial morphology. The sequence is that of Staphostatin B (sspC) from Staphylococcus aureus (strain MRSA252).